The primary structure comprises 576 residues: Putative export ATP-binding/permease protein RT0691 (576 aa).

The 284-residue stretch at 20–303 (LIIVMISLLS…IFELLSEIHL (284 aa)) folds into the ABC transmembrane type-1 domain. Helical transmembrane passes span 21 to 41 (IIVM…GSVF), 61 to 81 (ILYI…RSYF), 135 to 155 (FLSF…LMFF), 158 to 178 (FKLA…LIKF), 242 to 262 (ALFF…IVWI), and 277 to 297 (IISF…IFEL). An ABC transporter domain is found at 336 to 572 (IEFKNVDFTY…SEIYRNICRE (237 aa)). 371–378 (GRSGAGKS) serves as a coordination point for ATP.

This sequence belongs to the ABC transporter superfamily. In terms of assembly, homodimer.

It localises to the cell inner membrane. Functionally, part of an ABC transporter complex. Transmembrane domains (TMD) form a pore in the inner membrane and the ATP-binding domain (NBD) is responsible for energy generation. The protein is Putative export ATP-binding/permease protein RT0691 of Rickettsia typhi (strain ATCC VR-144 / Wilmington).